A 248-amino-acid chain; its full sequence is Deoxyribose-phosphate aldolase (248 aa).

Asp106 acts as the Proton donor/acceptor in catalysis. Lys168 acts as the Schiff-base intermediate with acetaldehyde in catalysis. Lys197 functions as the Proton donor/acceptor in the catalytic mechanism.

The protein belongs to the DeoC/FbaB aldolase family. DeoC type 1 subfamily.

Its subcellular location is the cytoplasm. The enzyme catalyses 2-deoxy-D-ribose 5-phosphate = D-glyceraldehyde 3-phosphate + acetaldehyde. It functions in the pathway carbohydrate degradation; 2-deoxy-D-ribose 1-phosphate degradation; D-glyceraldehyde 3-phosphate and acetaldehyde from 2-deoxy-alpha-D-ribose 1-phosphate: step 2/2. Functionally, catalyzes a reversible aldol reaction between acetaldehyde and D-glyceraldehyde 3-phosphate to generate 2-deoxy-D-ribose 5-phosphate. This Rhizobium meliloti (strain 1021) (Ensifer meliloti) protein is Deoxyribose-phosphate aldolase.